The following is a 378-amino-acid chain: Probable serine/threonine-protein kinase PBL7 (378 aa).

Residues 1-49 form a disordered region; it reads MGWIPCSGKSSGRNKTRRNGDHKLDRKSSDCSVSTSEKSRAKSSLSESK. Gly2 carries the N-myristoyl glycine lipid modification. Positions 18–29 are enriched in basic and acidic residues; that stretch reads RNGDHKLDRKSS. The segment covering 32–47 has biased composition (low complexity); it reads SVSTSEKSRAKSSLSE. Thr62 carries the phosphothreonine modification. Residues 73–350 enclose the Protein kinase domain; the sequence is FRKECLIGEG…ADVVTALSYL (278 aa). ATP-binding positions include 79-87 and Lys102; that span reads IGEGGFGRV. Residue Tyr147 is modified to Phosphotyrosine. Catalysis depends on Asp200, which acts as the Proton acceptor. Phosphoserine is present on residues Ser204 and Ser234. Residues Thr235 and Thr240 each carry the phosphothreonine modification. Tyr248 carries the post-translational modification Phosphotyrosine.

Belongs to the protein kinase superfamily. Ser/Thr protein kinase family. Interacts with BSU1 and BSL1. Phosphorylated at Ser-43, Ser-46 and Ser-234. As to expression, widely expressed.

It localises to the cell membrane. The enzyme catalyses L-seryl-[protein] + ATP = O-phospho-L-seryl-[protein] + ADP + H(+). The catalysed reaction is L-threonyl-[protein] + ATP = O-phospho-L-threonyl-[protein] + ADP + H(+). Its function is as follows. Serine/threonine-protein kinase involved in the positive regulation of brassinosteroid (BR) signaling and plant growth. Phosphorylates both BSU1 and BSL1 in vitro. This chain is Probable serine/threonine-protein kinase PBL7, found in Arabidopsis thaliana (Mouse-ear cress).